The chain runs to 292 residues: 4-hydroxy-tetrahydrodipicolinate synthase (292 aa).

T45 lines the pyruvate pocket. Y133 serves as the catalytic Proton donor/acceptor. K161 functions as the Schiff-base intermediate with substrate in the catalytic mechanism. I203 lines the pyruvate pocket.

The protein belongs to the DapA family. As to quaternary structure, homodimer.

It localises to the cytoplasm. It catalyses the reaction L-aspartate 4-semialdehyde + pyruvate = (2S,4S)-4-hydroxy-2,3,4,5-tetrahydrodipicolinate + H2O + H(+). It participates in amino-acid biosynthesis; L-lysine biosynthesis via DAP pathway; (S)-tetrahydrodipicolinate from L-aspartate: step 3/4. In terms of biological role, catalyzes the condensation of (S)-aspartate-beta-semialdehyde [(S)-ASA] and pyruvate to 4-hydroxy-tetrahydrodipicolinate (HTPA). This chain is 4-hydroxy-tetrahydrodipicolinate synthase, found in Pseudomonas savastanoi pv. phaseolicola (strain 1448A / Race 6) (Pseudomonas syringae pv. phaseolicola (strain 1448A / Race 6)).